Consider the following 571-residue polypeptide: Urease subunit alpha (571 aa).

One can recognise a Urease domain in the interval 134–571 (GAIDTHIHFI…LPMAQRYFLF (438 aa)). Ni(2+) is bound by residues His139, His141, and Lys222. Lys222 bears the N6-carboxylysine mark. His224 contributes to the substrate binding site. 2 residues coordinate Ni(2+): His251 and His277. His325 serves as the catalytic Proton donor. Asp365 contacts Ni(2+).

The protein belongs to the metallo-dependent hydrolases superfamily. Urease alpha subunit family. In terms of assembly, heterotrimer of UreA (gamma), UreB (beta) and UreC (alpha) subunits. Three heterotrimers associate to form the active enzyme. Requires Ni cation as cofactor. In terms of processing, carboxylation allows a single lysine to coordinate two nickel ions.

The protein resides in the cytoplasm. It catalyses the reaction urea + 2 H2O + H(+) = hydrogencarbonate + 2 NH4(+). The protein operates within nitrogen metabolism; urea degradation; CO(2) and NH(3) from urea (urease route): step 1/1. This is Urease subunit alpha from Bordetella pertussis (strain Tohama I / ATCC BAA-589 / NCTC 13251).